Here is a 241-residue protein sequence, read N- to C-terminus: High mobility group B protein 7 (241 aa).

Polar residues-rich tracts occupy residues 1-11 and 20-29; these read MAGPSTTSNAP and ETSSNTSTTL. Disordered stretches follow at residues 1–30, 75–116, and 174–241; these read MAGPSTTSNAPKQRKRVEAETSSNTSTTLR, TQAE…NKPK, and EYNK…LDDY. Over residues 77–90 the composition is skewed to basic and acidic residues; that stretch reads AEAKKKPAEKKKTT. The HMG box DNA-binding region spans 115–183; that stretch reads PKRPLTAFFI…EYNKSLESND (69 aa). Acidic residues-rich tracts occupy residues 182–221 and 229–241; these read NDADEEEEDEEKQSDDVDDAEEKQVDDDDEVEEKEVENTD and GKEEEEEEILDDY.

The protein belongs to the HMGB family. Post-translationally, phosphorylated. Expressed at low levels in lateral roots, root tips, cotyledons, leaves and flowers (including pedicels, but excluding styles).

It localises to the nucleus. In terms of biological role, binds preferentially double-stranded supercoiled DNA. Required for karyogamy during female gametophyte development, when the two polar nuclei fuse to form the diploid central cell nucleus. This Arabidopsis thaliana (Mouse-ear cress) protein is High mobility group B protein 7 (HMGB7).